Here is a 1396-residue protein sequence, read N- to C-terminus: DNA-directed RNA polymerase subunit beta' (1396 aa).

4 residues coordinate Zn(2+): Cys-72, Cys-74, Cys-87, and Cys-90. Residues Asp-463, Asp-465, and Asp-467 each contribute to the Mg(2+) site. 4 residues coordinate Zn(2+): Cys-814, Cys-889, Cys-896, and Cys-899.

Belongs to the RNA polymerase beta' chain family. As to quaternary structure, the RNAP catalytic core consists of 2 alpha, 1 beta, 1 beta' and 1 omega subunit. When a sigma factor is associated with the core the holoenzyme is formed, which can initiate transcription. Requires Mg(2+) as cofactor. Zn(2+) serves as cofactor.

It carries out the reaction RNA(n) + a ribonucleoside 5'-triphosphate = RNA(n+1) + diphosphate. DNA-dependent RNA polymerase catalyzes the transcription of DNA into RNA using the four ribonucleoside triphosphates as substrates. In Chlamydia trachomatis serovar A (strain ATCC VR-571B / DSM 19440 / HAR-13), this protein is DNA-directed RNA polymerase subunit beta'.